We begin with the raw amino-acid sequence, 445 residues long: Phosphoglucosamine mutase (445 aa).

The active-site Phosphoserine intermediate is Ser-101. Residues Ser-101, Asp-240, Asp-242, and Asp-244 each contribute to the Mg(2+) site. Ser-101 is modified (phosphoserine).

This sequence belongs to the phosphohexose mutase family. Mg(2+) serves as cofactor. Post-translationally, activated by phosphorylation.

The catalysed reaction is alpha-D-glucosamine 1-phosphate = D-glucosamine 6-phosphate. Catalyzes the conversion of glucosamine-6-phosphate to glucosamine-1-phosphate. The chain is Phosphoglucosamine mutase from Ectopseudomonas mendocina (strain ymp) (Pseudomonas mendocina).